Reading from the N-terminus, the 311-residue chain is N-acetylmuramic acid 6-phosphate etherase (311 aa).

An SIS domain is found at 66–229; sequence VADRMARGGR…STITMIRLGK (164 aa). Glu-94 acts as the Proton donor in catalysis. Glu-125 is an active-site residue.

The protein belongs to the GCKR-like family. MurNAc-6-P etherase subfamily. In terms of assembly, homodimer.

It carries out the reaction N-acetyl-D-muramate 6-phosphate + H2O = N-acetyl-D-glucosamine 6-phosphate + (R)-lactate. It participates in amino-sugar metabolism; N-acetylmuramate degradation. Functionally, specifically catalyzes the cleavage of the D-lactyl ether substituent of MurNAc 6-phosphate, producing GlcNAc 6-phosphate and D-lactate. The chain is N-acetylmuramic acid 6-phosphate etherase from Streptomyces avermitilis (strain ATCC 31267 / DSM 46492 / JCM 5070 / NBRC 14893 / NCIMB 12804 / NRRL 8165 / MA-4680).